The chain runs to 72 residues: Translation initiation factor IF-1 (72 aa).

Positions M1–R72 constitute an S1-like domain.

This sequence belongs to the IF-1 family. Component of the 30S ribosomal translation pre-initiation complex which assembles on the 30S ribosome in the order IF-2 and IF-3, IF-1 and N-formylmethionyl-tRNA(fMet); mRNA recruitment can occur at any time during PIC assembly.

The protein resides in the cytoplasm. Its function is as follows. One of the essential components for the initiation of protein synthesis. Stabilizes the binding of IF-2 and IF-3 on the 30S subunit to which N-formylmethionyl-tRNA(fMet) subsequently binds. Helps modulate mRNA selection, yielding the 30S pre-initiation complex (PIC). Upon addition of the 50S ribosomal subunit IF-1, IF-2 and IF-3 are released leaving the mature 70S translation initiation complex. The polypeptide is Translation initiation factor IF-1 (Treponema pallidum (strain Nichols)).